The chain runs to 459 residues: DNA primase large subunit (459 aa).

Positions 291, 369, 386, and 428 each coordinate [4Fe-4S] cluster.

The protein belongs to the eukaryotic-type primase large subunit family. In terms of assembly, heterodimer of a catalytic subunit spp1/pri1 and a regulatory subunit spp2/pri2, also known as the DNA primase complex. Component of the alpha DNA polymerase complex (also known as the alpha DNA polymerase-primase complex) consisting of four subunits: the catalytic subunit pol1, the accessory subunit spb70/pol12, and the primase complex subunits spp1/pri1 and spp2/pri2 respectively. Interacts with orc2; preferentially associates with the unphosphorylated orc2 in G1 pre-Start prior to orc2 being phosphorylated by cdc2, the interaction is mediated by spb70 and might enable the association of the whole alpha DNA polymerase complex to orc2/spb70 complex on chromatin. [4Fe-4S] cluster serves as cofactor.

It localises to the nucleus. The protein localises to the chromosome. Its function is as follows. Regulatory subunit of the DNA primase complex and component of the DNA polymerase alpha complex (also known as the alpha DNA polymerase-primase complex - primosome/replisome) which play an essential role in the initiation of DNA synthesis. During the S phase of the cell cycle, the DNA polymerase alpha complex (composed of a catalytic subunit pol1, an accessory subunit spb70/pol12 and two primase subunits, the catalytic subunit spp1/pri1 and the regulatory subunit spp2/pri2) is recruited to DNA at the replicative forks. The primase subunit of the polymerase alpha complex initiates DNA synthesis by oligomerising short RNA primers on both leading and lagging strands. This is DNA primase large subunit from Schizosaccharomyces pombe (strain 972 / ATCC 24843) (Fission yeast).